Consider the following 300-residue polypeptide: UDP-N-acetylenolpyruvoylglucosamine reductase (300 aa).

Residues 30-194 enclose the FAD-binding PCMH-type domain; sequence RVGGPADFFV…IGATFVLDSD (165 aa). Residue arginine 174 is part of the active site. Serine 223 functions as the Proton donor in the catalytic mechanism. Residue glutamate 293 is part of the active site.

Belongs to the MurB family. FAD serves as cofactor.

The protein localises to the cytoplasm. It catalyses the reaction UDP-N-acetyl-alpha-D-muramate + NADP(+) = UDP-N-acetyl-3-O-(1-carboxyvinyl)-alpha-D-glucosamine + NADPH + H(+). The protein operates within cell wall biogenesis; peptidoglycan biosynthesis. In terms of biological role, cell wall formation. This Geobacter sulfurreducens (strain ATCC 51573 / DSM 12127 / PCA) protein is UDP-N-acetylenolpyruvoylglucosamine reductase.